The sequence spans 270 residues: ATP synthase subunit a (270 aa).

5 helical membrane passes run 37-57 (NVHIDSLFFSVLTGMLFLWVF), 98-118 (VAPLALTIFCWVILMNLMDLI), 143-163 (DVNITMAMALGVFALMIYYSI), 217-237 (VVFILIAAMLPWYLQWVGALP), and 239-259 (AIFHILVILIQAFVFMMLTIV).

This sequence belongs to the ATPase A chain family. In terms of assembly, F-type ATPases have 2 components, CF(1) - the catalytic core - and CF(0) - the membrane proton channel. CF(1) has five subunits: alpha(3), beta(3), gamma(1), delta(1), epsilon(1). CF(0) has three main subunits: a(1), b(2) and c(9-12). The alpha and beta chains form an alternating ring which encloses part of the gamma chain. CF(1) is attached to CF(0) by a central stalk formed by the gamma and epsilon chains, while a peripheral stalk is formed by the delta and b chains.

The protein localises to the cell inner membrane. Functionally, key component of the proton channel; it plays a direct role in the translocation of protons across the membrane. The polypeptide is ATP synthase subunit a (Aliivibrio salmonicida (strain LFI1238) (Vibrio salmonicida (strain LFI1238))).